The following is a 342-amino-acid chain: Renalase (342 aa).

An N-terminal signal peptide occupies residues 1 to 17; sequence MSRVLVVGAGLTGSLCA. FAD-binding positions include Thr12, Arg42, and 61–62; that span reads QY.

The protein belongs to the renalase family. FAD is required as a cofactor. Expressed predominantly in kidney and testis with lower levels in liver, heart and embryo and weak expression in brain and skeletal muscle.

It is found in the secreted. The enzyme catalyses 1,2-dihydro-beta-NAD + O2 + H(+) = H2O2 + NAD(+). It catalyses the reaction 1,2-dihydro-beta-NADP + O2 + H(+) = H2O2 + NADP(+). It carries out the reaction 1,6-dihydro-beta-NADP + O2 + H(+) = H2O2 + NADP(+). The catalysed reaction is 1,6-dihydro-beta-NAD + O2 + H(+) = H2O2 + NAD(+). Its function is as follows. Catalyzes the oxidation of the less abundant 1,2-dihydro-beta-NAD(P) and 1,6-dihydro-beta-NAD(P) to form beta-NAD(P)(+). The enzyme hormone is secreted by the kidney, and circulates in blood and modulates cardiac function and systemic blood pressure. Lowers blood pressure in vivo by decreasing cardiac contractility and heart rate and preventing a compensatory increase in peripheral vascular tone, suggesting a causal link to the increased plasma catecholamine and heightened cardiovascular risk. High concentrations of catecholamines activate plasma renalase and promotes its secretion and synthesis. The polypeptide is Renalase (Mus musculus (Mouse)).